The primary structure comprises 23 residues: Alyteserin-1a (23 aa).

Asn-23 is modified (asparagine amide).

As to expression, expressed by the skin glands.

The protein localises to the secreted. The protein resides in the target cell membrane. Functionally, antibacterial peptide with amphipathic alpha-helical structure. Shows selective growth inhibitory activity against the Gram-negative bacteria E.coli (MIC=25 uM) Has a weak hemolytic activity against human erythrocytes (LC(50)&gt;100 uM). Is very weakly active against S.aureus (MIC=200 uM). This is Alyteserin-1a from Alytes obstetricans (Common midwife toad).